The sequence spans 164 residues: S-ribosylhomocysteine lyase (164 aa).

Fe cation is bound by residues H54, H58, and C128.

It belongs to the LuxS family. In terms of assembly, homodimer. The cofactor is Fe cation.

It catalyses the reaction S-(5-deoxy-D-ribos-5-yl)-L-homocysteine = (S)-4,5-dihydroxypentane-2,3-dione + L-homocysteine. Functionally, involved in the synthesis of autoinducer 2 (AI-2) which is secreted by bacteria and is used to communicate both the cell density and the metabolic potential of the environment. The regulation of gene expression in response to changes in cell density is called quorum sensing. Catalyzes the transformation of S-ribosylhomocysteine (RHC) to homocysteine (HC) and 4,5-dihydroxy-2,3-pentadione (DPD). The sequence is that of S-ribosylhomocysteine lyase from Campylobacter hominis (strain ATCC BAA-381 / DSM 21671 / CCUG 45161 / LMG 19568 / NCTC 13146 / CH001A).